Here is a 563-residue protein sequence, read N- to C-terminus: Arginine--tRNA ligase (563 aa).

The short motif at 134–144 (ANPTGLLHMGN) is the 'HIGH' region element.

The protein belongs to the class-I aminoacyl-tRNA synthetase family. As to quaternary structure, monomer.

It is found in the cytoplasm. It carries out the reaction tRNA(Arg) + L-arginine + ATP = L-arginyl-tRNA(Arg) + AMP + diphosphate. This is Arginine--tRNA ligase from Heliobacterium modesticaldum (strain ATCC 51547 / Ice1).